Reading from the N-terminus, the 155-residue chain is Protein-export protein SecB (155 aa).

Belongs to the SecB family. In terms of assembly, homotetramer, a dimer of dimers. One homotetramer interacts with 1 SecA dimer.

It is found in the cytoplasm. Functionally, one of the proteins required for the normal export of preproteins out of the cell cytoplasm. It is a molecular chaperone that binds to a subset of precursor proteins, maintaining them in a translocation-competent state. It also specifically binds to its receptor SecA. This is Protein-export protein SecB from Escherichia coli O139:H28 (strain E24377A / ETEC).